We begin with the raw amino-acid sequence, 450 residues long: Probable helicase D10 (450 aa).

A Helicase ATP-binding domain is found at 95–240; that stretch reads PIYEECDDTC…MFKDFFGYKI (146 aa). 108 to 115 provides a ligand contact to ATP; sequence GKPGFGKT. Residues 193–196 carry the DEAH box motif; the sequence is DEVH. Positions 289-439 constitute a Helicase C-terminal domain; it reads NLAHLYVNMG…TITMTPEKAV (151 aa).

It carries out the reaction ATP + H2O = ADP + phosphate + H(+). This Escherichia phage T5 (Enterobacteria phage T5) protein is Probable helicase D10 (D10).